The chain runs to 314 residues: Protein translocase subunit SecF (314 aa).

The next 6 membrane-spanning stretches (helical) occupy residues 17 to 37, 137 to 157, 158 to 178, 188 to 210, 250 to 270, and 272 to 292; these read AVAVSAILVAIALISMGTRGL, QGTYAILYALLAIVAYIWWRY, ELNFGVAAVIALVHDVVITLG, SLPVLAAILTVIGYSLNDTIVVF, TLIVVAVLYFFGGEVINGFAF, and LLVGIIVGTYSSIFVASLLLV.

It belongs to the SecD/SecF family. SecF subfamily. As to quaternary structure, forms a complex with SecD. Part of the essential Sec protein translocation apparatus which comprises SecA, SecYEG and auxiliary proteins SecDF. Other proteins may also be involved.

The protein localises to the cell inner membrane. Its function is as follows. Part of the Sec protein translocase complex. Interacts with the SecYEG preprotein conducting channel. SecDF uses the proton motive force (PMF) to complete protein translocation after the ATP-dependent function of SecA. In Desulfurispirillum indicum (strain ATCC BAA-1389 / DSM 22839 / S5), this protein is Protein translocase subunit SecF.